Reading from the N-terminus, the 304-residue chain is Large ribosomal subunit protein uL18z (304 aa).

The disordered stretch occupies residues 285 to 304; the sequence is LNALNSSAGADDDDEEEDDE. The span at 294 to 304 shows a compositional bias: acidic residues; the sequence is ADDDDEEEDDE.

The protein belongs to the universal ribosomal protein uL18 family. In terms of assembly, component of the large ribosomal subunit (LSU).

It localises to the cytoplasm. The protein localises to the nucleus. Component of the ribosome, a large ribonucleoprotein complex responsible for the synthesis of proteins in the cell. The small ribosomal subunit (SSU) binds messenger RNAs (mRNAs) and translates the encoded message by selecting cognate aminoacyl-transfer RNA (tRNA) molecules. The large subunit (LSU) contains the ribosomal catalytic site termed the peptidyl transferase center (PTC), which catalyzes the formation of peptide bonds, thereby polymerizing the amino acids delivered by tRNAs into a polypeptide chain. The nascent polypeptides leave the ribosome through a tunnel in the LSU and interact with protein factors that function in enzymatic processing, targeting, and the membrane insertion of nascent chains at the exit of the ribosomal tunnel. This chain is Large ribosomal subunit protein uL18z (RPL5A), found in Oryza sativa subsp. japonica (Rice).